We begin with the raw amino-acid sequence, 398 residues long: MRIGIFSEAYLPLISGVVTSVVNLKEGLEALGHEVYVITPIPSKDKFENDPSVIRIPGWVIPRKSLKGFRLVLFVKRYVRKMRKLKLDVVHIHTEFSMGKLGLAVAKKERIPSVYTLHTSYQDYTHYVSKLLTRFAPNAAKKLAGKINNQYTKNCHMTIVPTKKIYDKMIRLKHDGEFTIIPSGINLKPFYKSSYTSEQVQALKDKLGIRNDEFVAILVARIAKEKSIGDLVEAFVEFYKSYPNSRFIIIGDGPDKPVLDKLIDSKKASKYINTLGFVKNAEVGLYYQIADVFLNASTTETQGLTYVEALAASLPIIVRYDDVFDAFVEDGKNGIFFNKNEELVKHLIHIRQNPEILGTLSKNAEISTKPYAKEVYAKSCETLYLDLIDKNNKKLNKK.

Belongs to the glycosyltransferase group 1 family. Glycosyltransferase 4 subfamily. Requires Mg(2+) as cofactor.

The protein localises to the cell membrane. It carries out the reaction a 1,2-diacyl-sn-glycerol + UDP-alpha-D-glucose = a 1,2-diacyl-3-O-(alpha-D-glucopyranosyl)-sn-glycerol + UDP + H(+). With respect to regulation, activated by the negatively charged lipids phosphatidylglycerol (PG), cardiolipin (CL), dodecylphosphate-rac-glycerol (PDG), 1,2-dioleoyl-phosphatidylglycerol (DOPG) and phosphatidylserine (PS). Glucosyltransferase involved in the biosynthesis of the non-bilayer-prone membrane lipid alpha-monoglucosyldiacylglycerol. This is a major component for maintaining a certain anionic lipid surface charge density, for balancing the bilayer to non-bilayer phase equilibria and for keeping a constant lipid bilayer spontaneous curvature (curvature packing stress). Catalyzes the transfer of a glucosyl residue from UDP-Glc to diacylglycerol (DAG) acceptor to form the corresponding alpha-glucosyl-DAG (1,2-diacyl-3-O-(alpha-D-glucopyranosyl)-sn-glycerol). It can only use UDP-Glc as sugar donor and DAG is the preferred substrate. This is Alpha-monoglucosyldiacylglycerol synthase (mgs) from Acholeplasma laidlawii.